Here is a 1938-residue protein sequence, read N- to C-terminus: Myosin-4 (1938 aa).

Positions Asp33–Pro82 constitute a Myosin N-terminal SH3-like domain. Ser36 is modified (phosphoserine). Thr64 and Thr69 each carry phosphothreonine. Residues Asp86–Asp781 enclose the Myosin motor domain. Position 179 to 186 (Gly179 to Thr186) interacts with ATP. Tyr389 is modified (phosphotyrosine). Ser392 is modified (phosphoserine). Residue Thr419 is modified to Phosphothreonine. Phosphotyrosine is present on Tyr424. Positions Leu658 to Glu680 are actin-binding. His756 is modified (pros-methylhistidine). Residues Lys760–Gly774 are actin-binding. One can recognise an IQ domain in the interval Leu784–Ser813. Residues Ser845–Lys1926 adopt a coiled-coil conformation. Phosphoserine occurs at positions 1091, 1095, 1161, and 1236. Thr1240 bears the Phosphothreonine mark. Ser1242 is modified (phosphoserine). Thr1254 carries the post-translational modification Phosphothreonine. At Ser1260 the chain carries Phosphoserine. Thr1264 is subject to Phosphothreonine. Ser1277 carries the post-translational modification Phosphoserine. Residue Thr1285 is modified to Phosphothreonine. Phosphoserine occurs at positions 1287, 1291, 1302, and 1305. Tyr1463 bears the Phosphotyrosine mark. Thr1466 is subject to Phosphothreonine. Residue Ser1473 is modified to Phosphoserine. Position 1491 is a phosphotyrosine (Tyr1491). Ser1494 bears the Phosphoserine mark. Thr1500 is modified (phosphothreonine). Phosphoserine is present on Ser1513. Position 1516 is a phosphothreonine (Thr1516). Phosphoserine occurs at positions 1541, 1553, 1573, 1599, 1602, 1713, and 1725. Phosphothreonine occurs at positions 1729 and 1735. Ser1738 is modified (phosphoserine).

It belongs to the TRAFAC class myosin-kinesin ATPase superfamily. Myosin family. In terms of assembly, muscle myosin is a hexameric protein that consists of 2 heavy chain subunits (MHC), 2 alkali light chain subunits (MLC) and 2 regulatory light chain subunits (MLC-2).

The protein resides in the cytoplasm. It localises to the myofibril. Muscle contraction. This Oryctolagus cuniculus (Rabbit) protein is Myosin-4 (MYH4).